Consider the following 108-residue polypeptide: MGFKEGDAKKGANLFKTRCAQCHTLGEGEGNKIGPNLHGLFGRHTGSVEGFSYTDANKAKGIEWNKDTLFEYLENPKKYIPGTKMAFGGLKKDKDRNDLITFLQDSTK.

4 residues coordinate heme c: C19, C22, H23, and M85.

It belongs to the cytochrome c family. Post-translationally, binds 1 heme c group covalently per subunit.

It is found in the mitochondrion intermembrane space. In terms of biological role, electron carrier protein. The oxidized form of the cytochrome c heme group can accept an electron from the heme group of the cytochrome c1 subunit of cytochrome reductase. Cytochrome c then transfers this electron to the cytochrome oxidase complex, the final protein carrier in the mitochondrial electron-transport chain. This chain is Cytochrome c, found in Stellaria longipes (Longstalk starwort).